The following is a 316-amino-acid chain: Taste receptor type 2 member 3 (316 aa).

Topologically, residues 1-6 are extracellular; sequence MMGLTE. The chain crosses the membrane as a helical span at residues 7–27; that stretch reads GVFLILSGTQFTLGILVNCFI. Over 28–42 the chain is Cytoplasmic; that stretch reads ELVNGSSWFKTKRMS. The helical transmembrane segment at 43–63 threads the bilayer; sequence LSDFIITTLALLRIILLCIIL. At 64–94 the chain is on the extracellular side; sequence TDSFLIEFSPNTHDSGIIMQIIDVSWTFTNH. A helical transmembrane segment spans residues 95-115; it reads LSIWLATCLGVLYCLKIASFS. Over 116-128 the chain is Cytoplasmic; it reads HPTFLWLKWRVSR. Residues 129–149 form a helical membrane-spanning segment; sequence VMVWMLLGALLLSCGSTASLI. Residues 150–186 are Extracellular-facing; the sequence is NEFKLYSVFRGIEATRNVTEHFRKKRSEYYLIHVLGT. Asn-166 carries N-linked (GlcNAc...) asparagine glycosylation. The helical transmembrane segment at 187-207 threads the bilayer; it reads LWYLPPLIVSLASYSLLIFSL. Residues 208–234 lie on the Cytoplasmic side of the membrane; that stretch reads GRHTRQMLQNGTSSRDPTTEAHKRAIR. Residues 235-255 form a helical membrane-spanning segment; it reads IILSFFFLFLLYFLAFLIASF. Residues 256 to 266 lie on the Extracellular side of the membrane; that stretch reads GNFLPKTKMAK. The chain crosses the membrane as a helical span at residues 267–287; it reads MIGEVMTMFYPAGHSFILILG. Residues 288–316 lie on the Cytoplasmic side of the membrane; that stretch reads NSKLKQTFVVMLRCESGHLKPGSKGPIFS.

This sequence belongs to the G-protein coupled receptor T2R family. In terms of tissue distribution, expressed in subsets of taste receptor cells of the tongue and palate epithelium and exclusively in gustducin-positive cells. Expressed in the antrum and fundus (part of the stomach), duodenum and in gastric endocrine cells.

It localises to the membrane. Its function is as follows. Gustducin-coupled receptor implicated in the perception of bitter compounds in the oral cavity and the gastrointestinal tract. Signals through PLCB2 and the calcium-regulated cation channel TRPM5. In Homo sapiens (Human), this protein is Taste receptor type 2 member 3 (TAS2R3).